The sequence spans 88 residues: Putative membrane protein insertion efficiency factor (88 aa).

The interval 68–88 (VPPPNSDTRARGEADARSHRL) is disordered. Over residues 75–88 (TRARGEADARSHRL) the composition is skewed to basic and acidic residues.

The protein belongs to the UPF0161 family.

The protein localises to the cell inner membrane. Functionally, could be involved in insertion of integral membrane proteins into the membrane. The protein is Putative membrane protein insertion efficiency factor of Burkholderia ambifaria (strain MC40-6).